Reading from the N-terminus, the 214-residue chain is Octanoyltransferase (214 aa).

Residues 34–214 form the BPL/LPL catalytic domain; that stretch reads GVQKELVWLL…KFNEIFSNFN (181 aa). Substrate is bound by residues 73–80, 145–147, and 158–160; these read RGGKYTYH, AFG, and GVS. Catalysis depends on C176, which acts as the Acyl-thioester intermediate.

This sequence belongs to the LipB family.

The protein localises to the cytoplasm. It carries out the reaction octanoyl-[ACP] + L-lysyl-[protein] = N(6)-octanoyl-L-lysyl-[protein] + holo-[ACP] + H(+). It functions in the pathway protein modification; protein lipoylation via endogenous pathway; protein N(6)-(lipoyl)lysine from octanoyl-[acyl-carrier-protein]: step 1/2. Its function is as follows. Catalyzes the transfer of endogenously produced octanoic acid from octanoyl-acyl-carrier-protein onto the lipoyl domains of lipoate-dependent enzymes. Lipoyl-ACP can also act as a substrate although octanoyl-ACP is likely to be the physiological substrate. The chain is Octanoyltransferase from Ehrlichia chaffeensis (strain ATCC CRL-10679 / Arkansas).